We begin with the raw amino-acid sequence, 279 residues long: Acyl-coenzyme A thioesterase MBLAC2 (279 aa).

Ser-2 carries the N-acetylserine modification. Zn(2+) is bound by residues His-83, His-85, Asp-87, His-88, His-170, Asp-189, and His-231. The S-palmitoyl cysteine moiety is linked to residue Cys-254.

It belongs to the metallo-beta-lactamase superfamily. Glyoxalase II family. It depends on Zn(2+) as a cofactor. In terms of processing, palmitoylated on Cys-254 by ZDHHC20.

Its subcellular location is the endoplasmic reticulum membrane. The protein resides in the cell membrane. The enzyme catalyses hexadecanoyl-CoA + H2O = hexadecanoate + CoA + H(+). It carries out the reaction dodecanoyl-CoA + H2O = dodecanoate + CoA + H(+). It catalyses the reaction tetradecanoyl-CoA + H2O = tetradecanoate + CoA + H(+). The catalysed reaction is octadecanoyl-CoA + H2O = octadecanoate + CoA + H(+). The enzyme catalyses a beta-lactam + H2O = a substituted beta-amino acid. Beta-lactamase activity is inhibited by sulbactam. Acyl-CoA thioesterases are a group of enzymes that catalyze the hydrolysis of acyl-CoAs to the free fatty acid and coenzyme A (CoASH), providing the potential to regulate intracellular levels of acyl-CoAs, free fatty acids and CoASH. Has an acyl-CoA thioesterase activity towards the long chain fatty acyl-CoA thioester palmitoyl-CoA (hexadecanoyl-CoA; C16:0-CoA). Displays a substrate preference for fatty acyl-CoAs with chain-lengths C12-C18. Possesses beta-lactamase activity, catalyzing the hydrolysis of penicillin G and nitrocefin. Exhibits no activity towards other beta-lactam antibiotic classes including cephalosporins (cefotaxime) and carbapenems (imipenem). The sequence is that of Acyl-coenzyme A thioesterase MBLAC2 (MBLAC2) from Homo sapiens (Human).